The chain runs to 349 residues: Thiamine thiazole synthase, chloroplastic (349 aa).

The transit peptide at M1–R45 directs the protein to the chloroplast. Substrate-binding positions include A94, E114–Q115, G122, and A187. The residue at position 216 (C216) is a 2,3-didehydroalanine (Cys). Substrate-binding positions include D218, H233, M285, and R295–G297.

Belongs to the THI4 family. Homooctamer. Interacts with RBCX1 and RBCX1. Interacts with CPK33. It depends on Fe cation as a cofactor. In terms of processing, during the catalytic reaction, a sulfide is transferred from Cys-216 to a reaction intermediate, generating a dehydroalanine residue. Not phosphorylated in vitro by CPK33. In terms of tissue distribution, expressed at high levels in chloroplast-containing parenchymatic cells of leaves, inflorescence shoots and flowers, and at lower levels in the vascular system. In young plants, detected in roots and shoots including cotyledons, leaves and hypocotyls. Also observed in apical meristematic regions, siliques and embryos. Low expression in roots, limited to the vascular tissue. Broadly expressed in roots, cotyledons, leaves, hypocotyls, inflorescences, siliques, and strongly in guard cells.

It localises to the plastid. The protein resides in the chloroplast. Its subcellular location is the mitochondrion. The protein localises to the cell membrane. It catalyses the reaction [ADP-thiazole synthase]-L-cysteine + glycine + NAD(+) = [ADP-thiazole synthase]-dehydroalanine + ADP-5-ethyl-4-methylthiazole-2-carboxylate + nicotinamide + 3 H2O + 2 H(+). Involved in biosynthesis of the thiamine precursor thiazole. Catalyzes the conversion of NAD and glycine to adenosine diphosphate 5-(2-hydroxyethyl)-4-methylthiazole-2-carboxylic acid (ADT), an adenylated thiazole intermediate. The reaction includes an iron-dependent sulfide transfer from a conserved cysteine residue of the protein to a thiazole intermediate. The enzyme can only undergo a single turnover, which suggests it is a suicide enzyme. May have additional roles in adaptation to various stress conditions and in DNA damage tolerance. Acts as a positive regulator for the abscisic acid-induced activation of slow type anion channels during stomatal closure by repressing CPK33 kinase activity. The polypeptide is Thiamine thiazole synthase, chloroplastic (Arabidopsis thaliana (Mouse-ear cress)).